The sequence spans 168 residues: Mitochondrial ATP-independent inner membrane protease subunit 1a (168 aa).

The N-terminal 47 residues, 1 to 47 (MRMTFLSYLKQWRGTAKEAFENVSIVAKFLCLLHVTDRYIISTTHVH), are a transit peptide targeting the mitochondrion. Residues S50 and K94 contribute to the active site.

It belongs to the peptidase S26 family. IMP1 subfamily. In terms of assembly, heterodimer of 2 subunits, IMP1A/B and IMP12.

It is found in the mitochondrion inner membrane. Functionally, catalyzes the removal of transit peptides required for the targeting of proteins from the mitochondrial matrix, across the inner membrane, into the inter-membrane space. In Arabidopsis thaliana (Mouse-ear cress), this protein is Mitochondrial ATP-independent inner membrane protease subunit 1a.